The primary structure comprises 51 residues: Large ribosomal subunit protein bL33 (51 aa).

Residues 1 to 23 (MRDKIKLESSAGTGHFYTTTKNK) are disordered. Residues 10–20 (SAGTGHFYTTT) are compositionally biased toward polar residues.

It belongs to the bacterial ribosomal protein bL33 family.

This is Large ribosomal subunit protein bL33 from Chromobacterium violaceum (strain ATCC 12472 / DSM 30191 / JCM 1249 / CCUG 213 / NBRC 12614 / NCIMB 9131 / NCTC 9757 / MK).